The following is a 324-amino-acid chain: MSWLTPELTEILITVGKAIVILLVVVTCGAFMSMGERRLLGLFQGRYGPNRVGWGGSLQLVADMIKMFFKEDWVPNFTDKVIFTLAPMIAFTSMLIAFAIVPITPTWGVADLNIGILFFLMMAGLAVYAVLFAGWASNNKYSLLGAVRASAQTVSYEVFIGLSLMGVVAQAGSFNMRDIVDSQEHLWNVIPQFFGFITFAIAGVAVCHRHPFDQPEAEQEIADGYHIEYSGMKFGLFFVGEYIGIVTVSALMVTLFFGGWHGPILPPFVWFALKTGFFMMMFILIRASLPRPRYDQVMSFGWKVCLPITLLNLLATAAVILYNA.

The next 8 helical transmembrane spans lie at 11–31 (ILIT…CGAF), 81–101 (VIFT…FAIV), 114–134 (IGIL…LFAG), 154–174 (VSYE…AGSF), 186–206 (LWNV…GVAV), 237–257 (FFVG…TLFF), 264–284 (ILPP…MFIL), and 304–324 (VCLP…LYNA).

This sequence belongs to the complex I subunit 1 family. In terms of assembly, NDH-1 is composed of 13 different subunits. Subunits NuoA, H, J, K, L, M, N constitute the membrane sector of the complex.

It is found in the cell inner membrane. The catalysed reaction is a quinone + NADH + 5 H(+)(in) = a quinol + NAD(+) + 4 H(+)(out). NDH-1 shuttles electrons from NADH, via FMN and iron-sulfur (Fe-S) centers, to quinones in the respiratory chain. The immediate electron acceptor for the enzyme in this species is believed to be ubiquinone. Couples the redox reaction to proton translocation (for every two electrons transferred, four hydrogen ions are translocated across the cytoplasmic membrane), and thus conserves the redox energy in a proton gradient. This subunit may bind ubiquinone. The protein is NADH-quinone oxidoreductase subunit H of Pectobacterium carotovorum subsp. carotovorum (strain PC1).